The following is a 1825-amino-acid chain: Serine protease/ABC transporter B family protein tagD (1825 aa).

The N-terminal stretch at 1–26 (MKSNTNIRVLLVSGLILIFIFLGIKF) is a signal peptide. The region spanning 307 to 727 (PKAIFGTKDT…NAVFDTFAGA (421 aa)) is the Peptidase S8 domain. Catalysis depends on charge relay system residues aspartate 338 and histidine 384. The N-linked (GlcNAc...) asparagine glycan is linked to asparagine 629. Catalysis depends on serine 652, which acts as the Charge relay system. Asparagine 704, asparagine 781, asparagine 849, and asparagine 896 each carry an N-linked (GlcNAc...) asparagine glycan. Residues 971–991 (YIVIIVAGGTMSLIITVLILI) traverse the membrane as a helical segment. Residue asparagine 1018 is glycosylated (N-linked (GlcNAc...) asparagine). Helical transmembrane passes span 1071–1091 (FIIEITISTACSLVATAASIL), 1116–1136 (FIIIFLLALLEFVFSTISSWI), 1189–1209 (GILLSVSVGICKFVGSLVFIF), and 1210–1230 (TISWKLSLAFFATVPVLAIVT). The region spanning 1075–1358 (ITISTACSLV…LFGVYSSYVQ (284 aa)) is the ABC transmembrane type-1 domain. N-linked (GlcNAc...) asparagine glycosylation is present at asparagine 1295. Transmembrane regions (helical) follow at residues 1304 to 1324 (WLMVESLAFIILYFGAYLAIQ) and 1327 to 1347 (FTVGLLVSFSLYIGYVIDSST). The tract at residues 1386-1529 (DNIIDTNQDN…NDDPNDNNGI (144 aa)) is disordered. Residues 1388–1402 (IIDTNQDNNNNNNND) are compositionally biased toward low complexity. Acidic residues predominate over residues 1403-1415 (DISDSSSDDDDDN). Residue asparagine 1424 is glycosylated (N-linked (GlcNAc...) asparagine). Residues 1465–1494 (GEGIDNNNNNNNDNNINDDNNQQDPNNNNN) are compositionally biased toward low complexity. Over residues 1495 to 1514 (EIDDDGDDDGDDDDEGEDEN) the composition is skewed to acidic residues. Over residues 1515–1529 (NNNNNNDDPNDNNGI) the composition is skewed to low complexity. One can recognise an ABC transporter domain in the interval 1576–1813 (IEFKNVSFCY…KGKYYRMFAF (238 aa)). Asparagine 1580 is a glycosylation site (N-linked (GlcNAc...) asparagine). 1611–1618 (GPSGSGKS) serves as a coordination point for ATP. N-linked (GlcNAc...) asparagine glycans are attached at residues asparagine 1715 and asparagine 1755.

In the C-terminal section; belongs to the ABC transporter superfamily. ABCB family. Multidrug resistance exporter (TC 3.A.1.201) subfamily. The protein in the N-terminal section; belongs to the peptidase S8 family.

Its subcellular location is the membrane. The polypeptide is Serine protease/ABC transporter B family protein tagD (tagD) (Dictyostelium discoideum (Social amoeba)).